The following is a 354-amino-acid chain: Selenide, water dikinase (354 aa).

Cysteine 23 is a catalytic residue. ATP contacts are provided by residues lysine 26 and 54–56 (TSD). Aspartate 57 provides a ligand contact to Mg(2+). Residues aspartate 74, aspartate 97, and 145-147 (GHS) each bind ATP. Residue aspartate 97 coordinates Mg(2+). Aspartate 233 contacts Mg(2+).

The protein belongs to the selenophosphate synthase 1 family. Class I subfamily. As to quaternary structure, homodimer. Requires Mg(2+) as cofactor.

The catalysed reaction is hydrogenselenide + ATP + H2O = selenophosphate + AMP + phosphate + 2 H(+). Functionally, synthesizes selenophosphate from selenide and ATP. This Burkholderia orbicola (strain MC0-3) protein is Selenide, water dikinase.